A 433-amino-acid chain; its full sequence is Pseudopaline synthase (433 aa).

The helical transmembrane segment at 7 to 27 threads the bilayer; the sequence is SLGNVLLVGLGAVAIQVALDL. NAD(+)-binding positions include 16 to 19, 39 to 40, and T154; these read LGAV and NH. H219 functions as the Proton donor/acceptor in the catalytic mechanism. E364 is an NAD(+) binding site.

Belongs to the staphylopine dehydrogenase family. As to quaternary structure, homodimer. Interacts with CntL.

The protein resides in the cell membrane. It carries out the reaction pseudopaline + NAD(+) + H2O = (2S)-2-amino-4-{[(1S)-1-carboxy-2-(1H-imidazol-4-yl)ethyl]amino}butanoate + 2-oxoglutarate + NADH + H(+). Catalyzes the NADH-dependent reductive condensation of alpha-ketoglutarate to the intermediate formed by the adjacently encoded enzyme CntL, namely (2S)-2-amino-4-{[(1S)-1-carboxy-2-(1H-imidazol-4-yl)ethyl]amino}butanoate, leading to the production of pseudopaline. This is the last step in the biosynthesis of the metallophore pseudopaline, which is involved in the acquisition of nickel and zinc, and thus enables bacterial growth inside the host, where metal access is limited. Therefore, this enzyme probably contributes to Pseudomonas virulence. Can use neither pyruvate nor NADPH in place of alpha-ketoglutarate and NADH, respectively. The chain is Pseudopaline synthase from Pseudomonas aeruginosa (strain UCBPP-PA14).